The primary structure comprises 100 residues: uncharacterized protein (100 aa).

The tract at residues 40–100 (GDQMARKATS…DPTKNKSGRG (61 aa)) is disordered.

This is an uncharacterized protein from Mycobacterium tuberculosis (strain ATCC 25618 / H37Rv).